The primary structure comprises 270 residues: Tryptophan synthase alpha chain (270 aa).

Active-site proton acceptor residues include E49 and D60.

The protein belongs to the TrpA family. Tetramer of two alpha and two beta chains.

The catalysed reaction is (1S,2R)-1-C-(indol-3-yl)glycerol 3-phosphate + L-serine = D-glyceraldehyde 3-phosphate + L-tryptophan + H2O. It functions in the pathway amino-acid biosynthesis; L-tryptophan biosynthesis; L-tryptophan from chorismate: step 5/5. The alpha subunit is responsible for the aldol cleavage of indoleglycerol phosphate to indole and glyceraldehyde 3-phosphate. The chain is Tryptophan synthase alpha chain from Marinobacter nauticus (strain ATCC 700491 / DSM 11845 / VT8) (Marinobacter aquaeolei).